The following is a 214-amino-acid chain: Histidine biosynthesis bifunctional protein HisIE (214 aa).

Residues 1–125 form a phosphoribosyl-AMP cyclohydrolase region; the sequence is MPATALSLPL…ESIEPPPADT (125 aa). Residues 126–214 form a phosphoribosyl-ATP pyrophosphohydrolase region; the sequence is LSQVYNIVCQ…VYEQLQLRRR (89 aa).

In the N-terminal section; belongs to the PRA-CH family. The protein in the C-terminal section; belongs to the PRA-PH family.

Its subcellular location is the cytoplasm. The catalysed reaction is 1-(5-phospho-beta-D-ribosyl)-ATP + H2O = 1-(5-phospho-beta-D-ribosyl)-5'-AMP + diphosphate + H(+). The enzyme catalyses 1-(5-phospho-beta-D-ribosyl)-5'-AMP + H2O = 1-(5-phospho-beta-D-ribosyl)-5-[(5-phospho-beta-D-ribosylamino)methylideneamino]imidazole-4-carboxamide. It participates in amino-acid biosynthesis; L-histidine biosynthesis; L-histidine from 5-phospho-alpha-D-ribose 1-diphosphate: step 2/9. It functions in the pathway amino-acid biosynthesis; L-histidine biosynthesis; L-histidine from 5-phospho-alpha-D-ribose 1-diphosphate: step 3/9. The sequence is that of Histidine biosynthesis bifunctional protein HisIE from Thermosynechococcus vestitus (strain NIES-2133 / IAM M-273 / BP-1).